Consider the following 389-residue polypeptide: Stilbene synthase 3 (389 aa).

55–58 (KFQR) lines the substrate pocket. Residue cysteine 164 is part of the active site. Substrate contacts are provided by residues leucine 267 and 305–307 (GGR).

Belongs to the thiolase-like superfamily. Chalcone/stilbene synthases family. Homodimer.

It is found in the cytoplasm. It catalyses the reaction 4-coumaroyl-CoA + 3 malonyl-CoA + 3 H(+) = trans-resveratrol + 4 CO2 + 4 CoA. Its pathway is phytoalexin biosynthesis; 3,4',5-trihydroxystilbene biosynthesis; 3,4',5-trihydroxystilbene from trans-4-coumarate: step 2/2. This chain is Stilbene synthase 3, found in Arachis hypogaea (Peanut).